The primary structure comprises 443 residues: FAD-dependent monooxygenase orf3 (443 aa).

The helical transmembrane segment at 5-25 (SIEVAIIGAGITGITLALGLL) threads the bilayer. FAD is bound by residues E35 and G48. N75 and N87 each carry an N-linked (GlcNAc...) asparagine glycan. An FAD-binding site is contributed by R116. The active site involves R199. FAD is bound by residues D315 and A328.

This sequence belongs to the paxM FAD-dependent monooxygenase family. It depends on FAD as a cofactor.

The protein localises to the membrane. The protein operates within secondary metabolite biosynthesis. In terms of biological role, FAD-dependent monooxygenase; part of the gene cluster that mediates the biosynthesis of nigerpyrone and its derivatives carbonarone A and pestalamide A. The biosynthesis pathway begins with the polyketide assembly by epaA to form phenylacetyl triketide precursor from successive condensation of two malonyl-CoA, presumably with one phenylacetyl-CoA starter unit produced by the phenylacetyl-CoA ligase epaB. For the nigerpyrone biosynthesis, the reactive polyketide chain is released as an aldehyde through the R-domain. A nonenzymatic cyclization and dehydration may create nigerpyrone. For the biosynthesis of carbonarone A and pestalamide A, an extra methyl group is added through the C-methyltransferase domain. Several further steps involving the dehydrogenase orf1, the cytochrome P450 monooxygenase orf2 and the FAD-dependent monooxygenase orf3 are required to form a carbonarone A precursor which is converted to carbonarone A via cyclization. The O-acetyltransferase epaC could catalyze the transfer of 2-methylsuccinyl-CoA, a common intermediate in the ethylmalonyl-CoA pathway, to generate the final product pestalamide A. This is FAD-dependent monooxygenase orf3 from Aspergillus niger (strain ATCC MYA-4892 / CBS 513.88 / FGSC A1513).